Reading from the N-terminus, the 675-residue chain is Potassium-transporting ATPase ATP-binding subunit 2 (675 aa).

4 helical membrane-spanning segments follow: residues Ile-34–Ile-54, Leu-65–Phe-85, Ile-216–Leu-236, and Leu-245–Gly-265. Catalysis depends on Asp-304, which acts as the 4-aspartylphosphate intermediate. Residues Asp-341, Glu-345, Phe-372 to Ser-379, and Lys-390 each bind ATP. Asp-513 and Asp-517 together coordinate Mg(2+). 3 helical membrane passes run Ala-569–Met-591, Ala-611–Met-631, and Ile-644–Ile-664.

This sequence belongs to the cation transport ATPase (P-type) (TC 3.A.3) family. Type IA subfamily. As to quaternary structure, the system is composed of three essential subunits: KdpA, KdpB and KdpC.

It is found in the cell membrane. It catalyses the reaction K(+)(out) + ATP + H2O = K(+)(in) + ADP + phosphate + H(+). Functionally, part of the high-affinity ATP-driven potassium transport (or Kdp) system, which catalyzes the hydrolysis of ATP coupled with the electrogenic transport of potassium into the cytoplasm. This subunit is responsible for energy coupling to the transport system and for the release of the potassium ions to the cytoplasm. This Staphylococcus aureus (strain Mu50 / ATCC 700699) protein is Potassium-transporting ATPase ATP-binding subunit 2.